We begin with the raw amino-acid sequence, 242 residues long: Probable transcriptional regulatory protein Bmul_0984/BMULJ_02280 (242 aa).

This sequence belongs to the TACO1 family.

It is found in the cytoplasm. In Burkholderia multivorans (strain ATCC 17616 / 249), this protein is Probable transcriptional regulatory protein Bmul_0984/BMULJ_02280.